A 1171-amino-acid polypeptide reads, in one-letter code: DNA-directed RNA polymerase subunit beta' (1171 aa).

Zn(2+) contacts are provided by Cys60, Cys62, Cys75, and Cys78. The disordered stretch occupies residues 299–319; that stretch reads GRRGKPVTGPGNRPLKSLSDM. Residues Asp449, Asp451, and Asp453 each contribute to the Mg(2+) site. Residues Cys790, Cys864, Cys871, and Cys874 each coordinate Zn(2+).

This sequence belongs to the RNA polymerase beta' chain family. In terms of assembly, the RNAP catalytic core consists of 2 alpha, 1 beta, 1 beta' and 1 omega subunit. When a sigma factor is associated with the core the holoenzyme is formed, which can initiate transcription. The cofactor is Mg(2+). It depends on Zn(2+) as a cofactor.

The enzyme catalyses RNA(n) + a ribonucleoside 5'-triphosphate = RNA(n+1) + diphosphate. DNA-dependent RNA polymerase catalyzes the transcription of DNA into RNA using the four ribonucleoside triphosphates as substrates. The sequence is that of DNA-directed RNA polymerase subunit beta' from Alkaliphilus metalliredigens (strain QYMF).